The primary structure comprises 99 residues: Acylphosphatase (99 aa).

The Acylphosphatase-like domain maps to 5–97; the sequence is VRQIVIRGRV…RPGERFSQLP (93 aa). Residues Arg20 and Asn38 contribute to the active site.

The protein belongs to the acylphosphatase family.

The enzyme catalyses an acyl phosphate + H2O = a carboxylate + phosphate + H(+). This is Acylphosphatase (acyP) from Nitrobacter hamburgensis (strain DSM 10229 / NCIMB 13809 / X14).